Consider the following 146-residue polypeptide: Large ribosomal subunit protein uL15 (146 aa).

Positions 1–13 are enriched in basic and acidic residues; it reads MKLHELKPAEGSR. Residues 1 to 57 form a disordered region; sequence MKLHELKPAEGSRKVRNRVGRGTSSGNGKTSGRGQKGQKARSGVGLRPGFEGGQTPL. Over residues 23-35 the composition is skewed to gly residues; sequence TSSGNGKTSGRGQ.

This sequence belongs to the universal ribosomal protein uL15 family. Part of the 50S ribosomal subunit.

In terms of biological role, binds to the 23S rRNA. This is Large ribosomal subunit protein uL15 from Streptococcus thermophilus (strain CNRZ 1066).